The primary structure comprises 327 residues: Cyclic AMP-responsive element-binding protein 1 (327 aa).

2 disordered regions span residues 1–26 (MTME…QQMT) and 94–113 (SEDS…RREI). The region spanning 87 to 146 (QISTIAESEDSQESVDSVTDSQKRREILSRRPSYRKILNDLSSDAPGVPRIEEEKSEEET) is the KID domain. S119 carries the phosphoserine; by CaMK1, CaMK2, CaMK4, PKB/AKT1 or PKB/AKT2, RPS6KA3, RPS6KA4, RPS6KA5, SGK1 and TSSK4 modification. A Glycyl lysine isopeptide (Lys-Gly) (interchain with G-Cter in SUMO2) cross-link involves residue K122. The interval 125 to 148 (NDLSSDAPGVPRIEEEKSEEETSA) is disordered. S128 is subject to Phosphoserine. The residue at position 257 (S257) is a Phosphoserine; by HIPK2. The bZIP domain occupies 269 to 327 (ARKREVRLMKNREAARECRRKKKEYVKCLENRVAVLENQNKTLIEELKALKDLYCHKSD). A basic motif region spans residues 270–295 (RKREVRLMKNREAARECRRKKKEYVK). Residues K271 and K290 each participate in a glycyl lysine isopeptide (Lys-Gly) (interchain with G-Cter in SUMO1) cross-link. The tract at residues 297–318 (LENRVAVLENQNKTLIEELKAL) is leucine-zipper.

The protein belongs to the bZIP family. As to quaternary structure, interacts with PPRC1. Binds DNA as a dimer. This dimer is stabilized by magnesium ions. Interacts, through the bZIP domain, with the coactivators CRTC1/TORC1, CRTC2/TORC2 and CRTC3/TORC3. When phosphorylated on Ser-119, binds CREBBP. Interacts with CREBL2; regulates CREB1 phosphorylation, stability and transcriptional activity. Interacts (phosphorylated form) with TOX3. Interacts with ARRB1. Binds to HIPK2. Interacts with SGK1. Interacts with TSSK4; this interaction facilitates phosphorylation on Ser-119. Forms a complex with KMT2A and CREBBP. Interacts with TOX4; CREB1 is required for full induction of TOX4-dependent activity and the interaction is increased by cAMP and inhibited by insulin. (Microbial infection) Interacts with hepatitis B virus/HBV protein X. In terms of assembly, (Microbial infection) Interacts with HTLV-1 protein Tax. In terms of processing, stimulated by phosphorylation. Phosphorylation of both Ser-119 and Ser-128 in the SCN regulates the activity of CREB and participates in circadian rhythm generation. Phosphorylation of Ser-119 allows CREBBP binding. In liver, phosphorylation is induced by fasting or glucagon in a circadian fashion. CREBL2 positively regulates phosphorylation at Ser-119 thereby stimulating CREB1 transcriptional activity. Phosphorylated upon calcium influx by CaMK4 and CaMK2 on Ser-119. CaMK4 is much more potent than CaMK2 in activating CREB. Phosphorylated by CaMK2 on Ser-128. Phosphorylation of Ser-128 blocks CREB-mediated transcription even when Ser-119 is phosphorylated. Phosphorylated by CaMK1. Phosphorylation of Ser-257 by HIPK2 in response to genotoxic stress promotes CREB1 activity, facilitating the recruitment of the coactivator CBP. Phosphorylated at Ser-119 by RPS6KA3, RPS6KA4 and RPS6KA5 in response to mitogenic or stress stimuli. Phosphorylated by TSSK4 on Ser-119. Sumoylated with SUMO1. Sumoylation on Lys-290, but not on Lys-271, is required for nuclear localization of this protein. Sumoylation is enhanced under hypoxia, promoting nuclear localization and stabilization.

Its subcellular location is the nucleus. Phosphorylation-dependent transcription factor that stimulates transcription upon binding to the DNA cAMP response element (CRE), a sequence present in many viral and cellular promoters. Transcription activation is enhanced by the TORC coactivators which act independently of Ser-119 phosphorylation. Involved in different cellular processes including the synchronization of circadian rhythmicity and the differentiation of adipose cells. Regulates the expression of apoptotic and inflammatory response factors in cardiomyocytes in response to ERFE-mediated activation of AKT signaling. The sequence is that of Cyclic AMP-responsive element-binding protein 1 (CREB1) from Homo sapiens (Human).